The following is a 244-amino-acid chain: Small ribosomal subunit protein uS2 (244 aa).

Belongs to the universal ribosomal protein uS2 family.

The polypeptide is Small ribosomal subunit protein uS2 (Exiguobacterium sibiricum (strain DSM 17290 / CCUG 55495 / CIP 109462 / JCM 13490 / 255-15)).